The following is a 343-amino-acid chain: S-adenosylmethionine:tRNA ribosyltransferase-isomerase (343 aa).

The protein belongs to the QueA family. As to quaternary structure, monomer.

The protein localises to the cytoplasm. The catalysed reaction is 7-aminomethyl-7-carbaguanosine(34) in tRNA + S-adenosyl-L-methionine = epoxyqueuosine(34) in tRNA + adenine + L-methionine + 2 H(+). Its pathway is tRNA modification; tRNA-queuosine biosynthesis. Functionally, transfers and isomerizes the ribose moiety from AdoMet to the 7-aminomethyl group of 7-deazaguanine (preQ1-tRNA) to give epoxyqueuosine (oQ-tRNA). The sequence is that of S-adenosylmethionine:tRNA ribosyltransferase-isomerase from Enterococcus faecalis (strain ATCC 700802 / V583).